We begin with the raw amino-acid sequence, 1407 residues long: DNA-directed RNA polymerase subunit beta' (1407 aa).

Zn(2+)-binding residues include Cys70, Cys72, Cys85, and Cys88. 3 residues coordinate Mg(2+): Asp460, Asp462, and Asp464. Residues Cys814, Cys888, Cys895, and Cys898 each coordinate Zn(2+).

Belongs to the RNA polymerase beta' chain family. As to quaternary structure, the RNAP catalytic core consists of 2 alpha, 1 beta, 1 beta' and 1 omega subunit. When a sigma factor is associated with the core the holoenzyme is formed, which can initiate transcription. It depends on Mg(2+) as a cofactor. Zn(2+) serves as cofactor.

The enzyme catalyses RNA(n) + a ribonucleoside 5'-triphosphate = RNA(n+1) + diphosphate. Its function is as follows. DNA-dependent RNA polymerase catalyzes the transcription of DNA into RNA using the four ribonucleoside triphosphates as substrates. The polypeptide is DNA-directed RNA polymerase subunit beta' (Erwinia tasmaniensis (strain DSM 17950 / CFBP 7177 / CIP 109463 / NCPPB 4357 / Et1/99)).